The sequence spans 302 residues: Sodium/potassium-transporting ATPase subunit beta-233 (302 aa).

Over 1 to 30 (MSGNKDSDGGWKTFIWNSEKKELLGRTGCS) the chain is Cytoplasmic. The chain crosses the membrane as a helical; Signal-anchor for type II membrane protein span at residues 31–51 (WFKILLFYVIFYGCLAAVFVG). Residues 52–302 (TIQALLLTLS…FDIKITVNDS (251 aa)) are Extracellular-facing. 2 cysteine pairs are disulfide-bonded: C125-C148 and C158-C174. N-linked (GlcNAc...) asparagine glycans are attached at residues N193 and N263. An intrachain disulfide couples C213 to C274.

This sequence belongs to the X(+)/potassium ATPases subunit beta family. The sodium/potassium-transporting ATPase is composed of a catalytic alpha subunit, an auxiliary non-catalytic beta subunit and an additional regulatory subunit. In terms of processing, glycosylated. As to expression, expressed mainly in epithelial tissues.

It localises to the cell membrane. This is the non-catalytic component of the active enzyme, which catalyzes the hydrolysis of ATP coupled with the exchange of Na(+) and K(+) ions across the plasma membrane. The beta subunit regulates, through assembly of alpha/beta heterodimers, the number of sodium pumps transported to the plasma membrane. In Anguilla anguilla (European freshwater eel), this protein is Sodium/potassium-transporting ATPase subunit beta-233.